We begin with the raw amino-acid sequence, 299 residues long: MDKIHAMQLFIKVAELESFSRAADFFALPKGSVSRQIQALEHQLGTQLLQRTTRRVKLTPEGMTYYQRAKDVLSNLSELDGLFQQDATSISGKLRIDIPPGIAKSLLLPRLSEFLYLHPGIELELSSHDRPVDILHDGFDCVIRTGALPEDGVIARPLGKLTMVNCASPHYLTRFGYPQSPDDLTSHAIVRYTPHLGVHPLGFEVASVNGVQWFKSGGMLTVNSSENYLTAGLAGLGIIQIPRIAVREALRAGRLIEVLPGYRAEPLSLSLVYPQRRELSRRVNLFMQWLAGVMKEYLD.

The 59-residue stretch at 1–59 folds into the HTH lysR-type domain; sequence MDKIHAMQLFIKVAELESFSRAADFFALPKGSVSRQIQALEHQLGTQLLQRTTRRVKLT. The H-T-H motif DNA-binding region spans 19–38; it reads FSRAADFFALPKGSVSRQIQ.

It belongs to the LysR transcriptional regulatory family.

This is an uncharacterized protein from Escherichia coli (strain K12).